The following is a 444-amino-acid chain: D(2) dopamine receptor (444 aa).

At Met-1–Tyr-37 the chain is on the extracellular side. 3 N-linked (GlcNAc...) asparagine glycosylation sites follow: Asn-5, Asn-17, and Asn-23. Residues Ala-38–Ser-60 form a helical membrane-spanning segment. The Cytoplasmic segment spans residues Arg-61–Asn-70. The chain crosses the membrane as a helical span at residues Tyr-71–Tyr-93. The Extracellular portion of the chain corresponds to Leu-94–Asp-108. Cysteines 107 and 182 form a disulfide. A helical transmembrane segment spans residues Ile-109–Ile-130. Residues Asp-131–Arg-151 lie on the Cytoplasmic side of the membrane. A helical membrane pass occupies residues Val-152–Phe-172. Residues Gly-173–Ala-188 lie on the Extracellular side of the membrane. A helical membrane pass occupies residues Phe-189–Tyr-213. Residues Lys-211–Gln-374 are interaction with PPP1R9B. Topologically, residues Ile-214 to Gln-374 are cytoplasmic. The disordered stretch occupies residues Glu-282–Gly-329. The helical transmembrane segment at Met-375–Leu-396 threads the bilayer. The Extracellular portion of the chain corresponds to Asn-397 to Ser-410. The cysteines at positions 400 and 402 are disulfide-linked. Residues Ala-411–Ile-432 traverse the membrane as a helical segment. At Glu-433–Cys-444 the chain is on the cytoplasmic side. Residue Cys-444 is the site of S-palmitoyl cysteine attachment.

It belongs to the G-protein coupled receptor 1 family. Forms homo- and heterooligomers with DRD4. The interaction with DRD4 may modulate agonist-induced downstream signaling. Interacts with CADPS and CADPS2. Interacts with GPRASP1, PPP1R9B and CLIC6. Interacts with ARRB2. Interacts with HTR2A. Interacts with DRD1. In terms of assembly, interacts with KCNA2. In terms of processing, palmitoylated. Palmitoylation which is required for proper localization to the plasma membrane and stability of the receptor could be carried on by ZDHHC4, ZDHHC3 and ZDHHC8. Expressed in retinal hyaloid vessels at postnatal day 6. In terms of tissue distribution, expressed in the pituitary gland, stratum, brain stem and cortex. As to expression, expressed in the brain stem.

Its subcellular location is the cell membrane. It is found in the golgi apparatus membrane. Functionally, dopamine receptor whose activity is mediated by G proteins which inhibit adenylyl cyclase. Positively regulates postnatal regression of retinal hyaloid vessels via suppression of VEGFR2/KDR activity, downstream of OPN5. This Mus musculus (Mouse) protein is D(2) dopamine receptor (Drd2).